A 110-amino-acid chain; its full sequence is Phosphoribosyl-ATP pyrophosphatase (110 aa).

The protein belongs to the PRA-PH family.

It is found in the cytoplasm. The enzyme catalyses 1-(5-phospho-beta-D-ribosyl)-ATP + H2O = 1-(5-phospho-beta-D-ribosyl)-5'-AMP + diphosphate + H(+). The protein operates within amino-acid biosynthesis; L-histidine biosynthesis; L-histidine from 5-phospho-alpha-D-ribose 1-diphosphate: step 2/9. This Teredinibacter turnerae (strain ATCC 39867 / T7901) protein is Phosphoribosyl-ATP pyrophosphatase.